The following is a 360-amino-acid chain: E3 ubiquitin-protein ligase HAKAI homolog (360 aa).

The span at 1–11 (MLQIRLRRDSP) shows a compositional bias: basic and acidic residues. The interval 1 to 24 (MLQIRLRRDSPTETGNGARPSPTE) is disordered. Residues 72–107 (CVRCDFPIAIYGRLIPCDHAFCLECARSDSICYLCD) form an RING-type zinc finger. Residues 123 to 148 (FICAAPHCLRSFLKKLDFEAHVHDLH) form a C2H2-type zinc finger. The interval 156-360 (AEKEDGNQSD…QENRDGFGQE (205 aa)) is disordered. Polar residues-rich tracts occupy residues 163-179 (QSDVQSTMQQSSASEST), 186-214 (SQLQQSRELNRSASFAKSQSGFSQVQNYP), and 270-283 (YPTTESGSSQQFFN). Positions 293-304 (ESGGSEQSSLLG) are enriched in low complexity.

The protein belongs to the Hakai family. In terms of assembly, interacts with MTB and VIR. Associates with MTA, MTB, FIP37 and VIR to form the m6A writer complex which is essential for adenosine methylation at specific mRNA sequences.

Its subcellular location is the nucleus speckle. The protein localises to the nucleus. It is found in the nucleoplasm. It catalyses the reaction S-ubiquitinyl-[E2 ubiquitin-conjugating enzyme]-L-cysteine + [acceptor protein]-L-lysine = [E2 ubiquitin-conjugating enzyme]-L-cysteine + N(6)-ubiquitinyl-[acceptor protein]-L-lysine.. Functionally, probable E3 ubiquitin-protein ligase which is a subunit of the N6-methyltransferase complex, a multiprotein complex that mediates N6-methyladenosine (m6A) methylation at the 5'-[AG]GAC-3' consensus sites of some mRNAs. Associates with MTA, MTB, FIP37 and VIR to form the m6A writer complex which is essential for adenosine methylation at specific mRNA sequences. N6-methyladenosine (m6A) plays a role in mRNA stability, processing, translation efficiency and editing. The polypeptide is E3 ubiquitin-protein ligase HAKAI homolog (Arabidopsis thaliana (Mouse-ear cress)).